Reading from the N-terminus, the 999-residue chain is Probable metabotropic glutamate receptor mgl-1 (999 aa).

L-glutamate contacts are provided by residues Ser-202, 223-225 (AST), Tyr-273, Glu-363, and Lys-455. Asn-518 carries an N-linked (GlcNAc...) asparagine glycan. Helical transmembrane passes span 682–704 (SLVPTILAVFGIIATLFVIVVYV), 719–739 (LSYILLISMIMCYCMTFVLLS), 751–769 (TGIGFAFSCLYSAMFVKTN), 792–812 (VVMTAMLAGVQLIGSLIWLSV), 836–857 (HHFLYSLAYDGFLIVLCTTYAV), 871–893 (FIGFSMYTTCVVWLSWIFFFFGT), and 904–929 (LCISISMSANVALACIFSPKLWIILF). Residues 975-999 (DSTRRRSSRKTSQPTSTSSAHDTFL) form a disordered region. The span at 984 to 993 (KTSQPTSTSS) shows a compositional bias: low complexity.

It belongs to the G-protein coupled receptor 3 family.

The protein localises to the cell membrane. Its function is as follows. G-protein coupled receptor for glutamate. Ligand binding causes a conformation change that triggers signaling via guanine nucleotide-binding proteins (G proteins) and modulates the activity of down-stream effectors. This chain is Probable metabotropic glutamate receptor mgl-1 (mgl-1), found in Caenorhabditis elegans.